The following is a 106-amino-acid chain: Immunoglobulin lambda constant 6 (106 aa).

The Ig-like domain maps to 7-101; the sequence is PSVTLFPPSS…EGSTVEKTVA (95 aa). Cys28 and Cys87 are oxidised to a cystine.

In terms of assembly, immunoglobulins are composed of two identical heavy chains and two identical light chains; disulfide-linked.

Its subcellular location is the secreted. It localises to the cell membrane. Its function is as follows. Constant region of immunoglobulin light chains. Immunoglobulins, also known as antibodies, are membrane-bound or secreted glycoproteins produced by B lymphocytes. In the recognition phase of humoral immunity, the membrane-bound immunoglobulins serve as receptors which, upon binding of a specific antigen, trigger the clonal expansion and differentiation of B lymphocytes into immunoglobulins-secreting plasma cells. Secreted immunoglobulins mediate the effector phase of humoral immunity, which results in the elimination of bound antigens. The antigen binding site is formed by the variable domain of one heavy chain, together with that of its associated light chain. Thus, each immunoglobulin has two antigen binding sites with remarkable affinity for a particular antigen. The variable domains are assembled by a process called V-(D)-J rearrangement and can then be subjected to somatic hypermutations which, after exposure to antigen and selection, allow affinity maturation for a particular antigen. The chain is Immunoglobulin lambda constant 6 from Homo sapiens (Human).